The sequence spans 435 residues: S-locus-specific glycoprotein BS29-2 (435 aa).

An N-terminal signal peptide occupies residues 1–30; the sequence is MKGVGKPYENSHTSFLLVFFVLTLFSPAFS. Residues 33-155 enclose the Bulb-type lectin domain; the sequence is TLSSIESLKI…NKNDRSGFLW (123 aa). Residues Asn113, Asn120, Asn244, Asn260, and Asn389 are each glycosylated (N-linked (GlcNAc...) asparagine). The PAN domain maps to 350 to 430; sequence CSGDGFTRMK…NGQDLYVRLA (81 aa). Cystine bridges form between Cys380-Cys405 and Cys388-Cys390.

In terms of tissue distribution, stigma.

In terms of biological role, involved in sporophytic self-incompatibility system (the inability of flowering plants to achieve self-fertilization). The chain is S-locus-specific glycoprotein BS29-2 (SLSG) from Brassica oleracea var. alboglabra (Chinese kale).